A 202-amino-acid chain; its full sequence is Superoxide dismutase [Mn] (202 aa).

H27 contacts Mn(2+). 2 positions are modified to phosphothreonine: T34 and T70. Residues H82, D164, and H168 each contribute to the Mn(2+) site.

Belongs to the iron/manganese superoxide dismutase family. As to quaternary structure, homodimer; under aerobic conditions. Under anaerobic conditions it is a component of the so-called 'green protein' complex (GPC), which consists of at least two components, SodA and a nucleoside diphosphate kinase (NDK). Mn(2+) serves as cofactor.

Its subcellular location is the cytoplasm. It carries out the reaction 2 superoxide + 2 H(+) = H2O2 + O2. In terms of biological role, destroys superoxide anion radicals which are normally produced within the cells and which are toxic to biological systems. Active only in homodimeric state. In Virgibacillus halodenitrificans (Bacillus halodenitrificans), this protein is Superoxide dismutase [Mn] (sodA).